A 718-amino-acid polypeptide reads, in one-letter code: Calpastatin (718 aa).

2 disordered regions span residues 1-189 (MNPA…MSST) and 210-238 (EKKT…LSSD). Basic residues predominate over residues 20-29 (PHSKKRHRRQ). Basic and acidic residues-rich tracts occupy residues 30–61 (DAKT…EHTK) and 68–104 (HASD…KPQD). Lys-32 is covalently cross-linked (Glycyl lysine isopeptide (Lys-Gly) (interchain with G-Cter in SUMO2)). The residue at position 49 (Lys-49) is an N6-acetyllysine. Ser-86 is subject to Phosphoserine. Over residues 114-124 (AAGTTAAPGKA) the composition is skewed to low complexity. Ser-133, Ser-222, and Ser-243 each carry phosphoserine. The Inhibitory domain 1 repeat unit spans residues 170-222 (TQEDSTAYTGPEISDPMSSTYIEELGKREVTIPPKYRELLEKKTGVAGPPPDS). Disordered regions lie at residues 266-291 (ESAK…AMSD) and 320-509 (EAKR…QLPA). The residue at position 290 (Ser-290) is a Blocked amino end (Ser); in form erythrocyte. Residues 307 to 359 (EPELDLSSIKEVAEAKRKEEKVEKCGEDDETVPAEYRLKPATDKDGKPLLPEP) form an Inhibitory domain 2 repeat. 3 stretches are compositionally biased toward basic and acidic residues: residues 320 to 331 (EAKRKEEKVEKC), 342 to 377 (YRLK…ELSK), and 384 to 399 (SNEK…EESK). A phosphoserine mark is found at Ser-367, Ser-369, and Ser-376. Residues 400-411 (AAVPAPVAEAVP) show a composition bias toward low complexity. Ser-444 bears the Phosphoserine mark. Residues 446–496 (GRKEADPEEGKPVADKIKEKSKEEEREKLGEKEETIPPDYRLEEAKDKDGK) are compositionally biased toward basic and acidic residues. One copy of the Inhibitory domain 3 repeat lies at 450-503 (ADPEEGKPVADKIKEKSKEEEREKLGEKEETIPPDYRLEEAKDKDGKPLLPSEP). Phosphoserine occurs at positions 520, 531, 579, and 581. The disordered stretch occupies residues 543–718 (VSEVVSQSPA…KPKANEKNAS (176 aa)). Positions 566 to 579 (PSNKELDDALDKLS) are enriched in basic and acidic residues. The stretch at 587–640 (PDPDENKPMEDKVKERAKKEHKDKLGERDDTIPPEYRHLLDQGEQDKPEKPPTK) is one Inhibitory domain 4 repeat. 2 stretches are compositionally biased toward basic and acidic residues: residues 587 to 650 (PDPD…KPAG) and 706 to 718 (ETSK…KNAS).

Belongs to the protease inhibitor I27 (calpastatin) family.

Its function is as follows. Specific inhibition of calpain (calcium-dependent cysteine protease). Plays a key role in postmortem tenderization of meat and have been proposed to be involved in muscle protein degradation in living tissue. This is Calpastatin (CAST) from Oryctolagus cuniculus (Rabbit).